The chain runs to 548 residues: Stretch-activated cation channel MID1 (548 aa).

An N-terminal signal peptide occupies residues 1–20 (MIVWQALFVVYCLFTTSIHG). Over 21–341 (LFQDFNPFAN…YLTKKISNGD (321 aa)) the chain is Extracellular. Residues Asn32, Asn70, Asn112, Asn125, Asn159, Asn175, Asn228, Asn238, Asn265, Asn282, Asn285, Asn291, and Asn324 are each glycosylated (N-linked (GlcNAc...) asparagine). A helical membrane pass occupies residues 342–358 (GLSSVGGILFSHVYFTT). At 359 to 548 (RSTDVCSLIF…LMVIHPLDDT (190 aa)) the chain is on the cytoplasmic side.

As to quaternary structure, forms an oligomer with a molecular mass of 200 kDa by disulfide bonds. Interacts with CCH1 to form a Ca(2+) influx channel. In terms of processing, N-glycosylated.

It localises to the cell membrane. In terms of biological role, calcium-permeable, cation-selective stretch-activated channel (SAC) that functions together with CCH1 to mediate calcium entry into cells. Required during mating. Together with CCH1, essential for tolerance to iron stress, which leads to an increased oxidative poise, and to cold stress. The sequence is that of Stretch-activated cation channel MID1 (MID1) from Saccharomyces cerevisiae (strain ATCC 204508 / S288c) (Baker's yeast).